The following is a 1076-amino-acid chain: Probable cellulose synthase A catalytic subunit 1 [UDP-forming] (1076 aa).

Over 1-267 (MAANAGMVAG…SRIVPIPSNQ (267 aa)) the chain is Cytoplasmic. Cys-41, Cys-44, Cys-60, Cys-63, Cys-68, Cys-71, Cys-83, and Cys-86 together coordinate Zn(2+). The RING-type; degenerate zinc-finger motif lies at 41–87 (CQICGDTVGVSATGDVFVACNECAFPVCRPCYEYERKEGNQCCPQCK). A disordered region spans residues 119–179 (HGNGKGPEWQ…HSIRSGTSSY (61 aa)). The chain crosses the membrane as a helical span at residues 268 to 288 (LNLYRIVIILRLIILMFFFQY). The Extracellular segment spans residues 289–296 (RVTHPVRD). The helical transmembrane segment at 297–317 (AYGLWLVSVICEIWFALSWLL) threads the bilayer. The Cytoplasmic portion of the chain corresponds to 318–851 (DQFPKWYPIN…LLERLAYINT (534 aa)). UDP-alpha-D-glucose is bound by residues Ser-356, Lys-362, Glu-363, and Asp-392. Asp-392 is an active-site residue. Positions 446 to 473 (VKERRAMKREYEEFKVRINALVAKAQKV) form a coiled coil. UDP-alpha-D-glucose is bound at residue Lys-533. 2 residues coordinate Mn(2+): Lys-534 and Asp-558. Asp-775 is a catalytic residue. The helical transmembrane segment at 852 to 872 (IVYPITSIPLIAYCVLPAICL) threads the bilayer. Residues 873-884 (LTNKFIIPEISN) are Extracellular-facing. Residues 885-905 (YAGMFFILLFASIFATGILEL) form a helical membrane-spanning segment. The Cytoplasmic portion of the chain corresponds to 906–920 (RWSGVGIEDWWRNEQ). The helical transmembrane segment at 921-941 (FWVIGGTSAHLFAVFQGLLKV) threads the bilayer. Topologically, residues 942–971 (LAGIDTNFTVTSKASDEDGDFAELYVFKWT) are extracellular. N-linked (GlcNAc...) asparagine glycosylation is present at Asn-948. Residues 972 to 992 (SLLIPPTTVLVINLVGMVAGI) traverse the membrane as a helical segment. At 993–1003 (SYAINSGYQSW) the chain is on the cytoplasmic side. The chain crosses the membrane as a helical span at residues 1004-1024 (GPLFGKLFFSIWVILHLYPFL). The Extracellular segment spans residues 1025 to 1033 (KGLMGRQNR). A helical membrane pass occupies residues 1034–1054 (TPTIVIVWSILLASIFSLLWV). Residues 1055–1076 (KIDPFISPTQKAVALGQCGVNC) are Cytoplasmic-facing.

The protein belongs to the glycosyltransferase 2 family. Plant cellulose synthase subfamily. Zn(2+) serves as cofactor. It depends on Mn(2+) as a cofactor.

The protein localises to the cell membrane. The enzyme catalyses [(1-&gt;4)-beta-D-glucosyl](n) + UDP-alpha-D-glucose = [(1-&gt;4)-beta-D-glucosyl](n+1) + UDP + H(+). It participates in glycan metabolism; plant cellulose biosynthesis. Its function is as follows. Catalytic subunit of cellulose synthase terminal complexes ('rosettes'), required for beta-1,4-glucan microfibril crystallization, a major mechanism of the cell wall formation. This Oryza sativa subsp. indica (Rice) protein is Probable cellulose synthase A catalytic subunit 1 [UDP-forming] (CESA1).